The primary structure comprises 694 residues: Elongation factor G (694 aa).

One can recognise a tr-type G domain in the interval 12-286 (SKLRNIGIMA…AVVDYLPSPI (275 aa)). GTP-binding positions include 21 to 28 (AHIDAGKT), 85 to 89 (DTPGH), and 139 to 142 (NKMD).

The protein belongs to the TRAFAC class translation factor GTPase superfamily. Classic translation factor GTPase family. EF-G/EF-2 subfamily.

The protein localises to the cytoplasm. Catalyzes the GTP-dependent ribosomal translocation step during translation elongation. During this step, the ribosome changes from the pre-translocational (PRE) to the post-translocational (POST) state as the newly formed A-site-bound peptidyl-tRNA and P-site-bound deacylated tRNA move to the P and E sites, respectively. Catalyzes the coordinated movement of the two tRNA molecules, the mRNA and conformational changes in the ribosome. This is Elongation factor G from Pseudothermotoga lettingae (strain ATCC BAA-301 / DSM 14385 / NBRC 107922 / TMO) (Thermotoga lettingae).